Here is a 215-residue protein sequence, read N- to C-terminus: Thiamine-phosphate synthase (215 aa).

Residues 42–46 (QYREK) and Asp-77 contribute to the 4-amino-2-methyl-5-(diphosphooxymethyl)pyrimidine site. Mg(2+)-binding residues include Asp-78 and Asp-97. Ser-116 serves as a coordination point for 4-amino-2-methyl-5-(diphosphooxymethyl)pyrimidine. 143-145 (TKS) lines the 2-[(2R,5Z)-2-carboxy-4-methylthiazol-5(2H)-ylidene]ethyl phosphate pocket. Position 146 (Lys-146) interacts with 4-amino-2-methyl-5-(diphosphooxymethyl)pyrimidine. 2-[(2R,5Z)-2-carboxy-4-methylthiazol-5(2H)-ylidene]ethyl phosphate-binding positions include Gly-174 and 194–195 (IS).

This sequence belongs to the thiamine-phosphate synthase family. It depends on Mg(2+) as a cofactor.

It catalyses the reaction 2-[(2R,5Z)-2-carboxy-4-methylthiazol-5(2H)-ylidene]ethyl phosphate + 4-amino-2-methyl-5-(diphosphooxymethyl)pyrimidine + 2 H(+) = thiamine phosphate + CO2 + diphosphate. The catalysed reaction is 2-(2-carboxy-4-methylthiazol-5-yl)ethyl phosphate + 4-amino-2-methyl-5-(diphosphooxymethyl)pyrimidine + 2 H(+) = thiamine phosphate + CO2 + diphosphate. It carries out the reaction 4-methyl-5-(2-phosphooxyethyl)-thiazole + 4-amino-2-methyl-5-(diphosphooxymethyl)pyrimidine + H(+) = thiamine phosphate + diphosphate. It functions in the pathway cofactor biosynthesis; thiamine diphosphate biosynthesis; thiamine phosphate from 4-amino-2-methyl-5-diphosphomethylpyrimidine and 4-methyl-5-(2-phosphoethyl)-thiazole: step 1/1. In terms of biological role, condenses 4-methyl-5-(beta-hydroxyethyl)thiazole monophosphate (THZ-P) and 2-methyl-4-amino-5-hydroxymethyl pyrimidine pyrophosphate (HMP-PP) to form thiamine monophosphate (TMP). This Limosilactobacillus reuteri (strain DSM 20016) (Lactobacillus reuteri) protein is Thiamine-phosphate synthase.